Consider the following 234-residue polypeptide: MDNVLARPADICCLKGSFHSGDATGSTIQIDGIDTYVAKPHPDKSNGNVLLFFPDAFGLHINSFLMMDAFAECGYLTLGVDYFLGDPVTKHSLTPLSDPNFDFESWKNKHLKASEDAAARWVKAVKAQYGSSEDVRFACVGYCWGARFVCQQLSADAPIFFSVPSTDKLFEPEQRSRTIEILTENNKQFNMQVFANVGHGFASRARLTDPYEKWAKEATFKSFVDWFDFWMEKK.

Residues Cys143, Asp167, and His199 contribute to the active site.

It belongs to the dienelactone hydrolase family.

The protein operates within xenobiotic degradation. In terms of biological role, dienlactone hydrolase; part of the Fusarium detoxification of benzoxazolinone cluster 2 (FDB2) involved in the degradation of benzoxazolinones produced by the host plant. Maize, wheat, and rye produce the 2 benzoxazinone phytoanticipins 2,4-dihy-droxy-7-methoxy-1,4-benzoxazin-3-one (DIMBOA) and 2,4-dihydroxy-1,4-benzoxazin-3-one (DIBOA) that, due to their inherent instability once released, spontaneously degrade to the more stable corresponding benzoxazolinones, 6-methoxy-2-benzoxazolinone (MBOA) and 2-benzoxazolinone (BOA), respectively. The first step in the detoxification of benzoxazolinones involves the hydrolysis of the cyclic ester bond of benzoxazolinones by the FDB1 cluster gamma-lactamase MBL1 to aminophenols. MBL1 is able to convert BOA into 2-aminophenol (2-AP), as well as MBOA into 5-methoxy-2-aminophenol (2-AMP). The FDB2 cluster N-malonyltransferase FDB2/NAT1 then metabolizes aminophenols via N-malonylation to non-toxic malonamic acids. FDB2/NAT1 converts 2-AP into N-(2-hydroxyphenyl) malonamic acid (HPMA) and 2-AMP into N-(2-hydroxy-4-methoxyphenyl) malonamic acid (HMPMA). The duplicated dienlactone hydrolases DLH1 and DLH2 may provide redundant function for hydrolyzing the lactone moiety in the BOA molecule. The roles of the amidases and other enzymes encoded by the 2 FDB clusters have not been identified so far. The sequence is that of Dienlactone hydrolase 2 from Gibberella moniliformis (strain M3125 / FGSC 7600) (Maize ear and stalk rot fungus).